The sequence spans 689 residues: DNA topoisomerase 1 (689 aa).

Positions Asp-3–Ile-113 constitute a Toprim domain. Positions 9 and 82 each coordinate Mg(2+). One can recognise a Topo IA-type catalytic domain in the interval Glu-129–Glu-557. The interaction with DNA stretch occupies residues Ser-163–Gln-168. Tyr-298 (O-(5'-phospho-DNA)-tyrosine intermediate) is an active-site residue. The segment at Ser-328 to Asp-356 is disordered. 3 C4-type zinc fingers span residues Cys-577–Cys-603, Cys-617–Cys-645, and Cys-658–Cys-681.

This sequence belongs to the type IA topoisomerase family. In terms of assembly, monomer. Mg(2+) is required as a cofactor.

It catalyses the reaction ATP-independent breakage of single-stranded DNA, followed by passage and rejoining.. In terms of biological role, releases the supercoiling and torsional tension of DNA, which is introduced during the DNA replication and transcription, by transiently cleaving and rejoining one strand of the DNA duplex. Introduces a single-strand break via transesterification at a target site in duplex DNA. The scissile phosphodiester is attacked by the catalytic tyrosine of the enzyme, resulting in the formation of a DNA-(5'-phosphotyrosyl)-enzyme intermediate and the expulsion of a 3'-OH DNA strand. The free DNA strand then undergoes passage around the unbroken strand, thus removing DNA supercoils. Finally, in the religation step, the DNA 3'-OH attacks the covalent intermediate to expel the active-site tyrosine and restore the DNA phosphodiester backbone. In Staphylococcus aureus (strain USA300), this protein is DNA topoisomerase 1.